The following is an 861-amino-acid chain: Glucans biosynthesis glucosyltransferase H (861 aa).

Disordered regions lie at residues 65-89 (RLSA…SVGR) and 101-129 (AGEP…SMVP). Basic and acidic residues-rich tracts occupy residues 67–76 (SAREPAKGET) and 105–114 (LLKRRPDGTV). A run of 6 helical transmembrane segments spans residues 181 to 201 (FLLG…TKVL), 208 to 228 (LLEI…SAGF), 532 to 552 (VFLT…FLLL), 589 to 609 (LFSA…LLLV), 616 to 636 (GGLP…ALLA), and 698 to 718 (FVLW…LSVM).

It belongs to the glycosyltransferase 2 family. OpgH subfamily.

The protein resides in the cell inner membrane. Its pathway is glycan metabolism; osmoregulated periplasmic glucan (OPG) biosynthesis. Involved in the biosynthesis of osmoregulated periplasmic glucans (OPGs). In Cupriavidus pinatubonensis (strain JMP 134 / LMG 1197) (Cupriavidus necator (strain JMP 134)), this protein is Glucans biosynthesis glucosyltransferase H.